The chain runs to 259 residues: Flagellar L-ring protein (259 aa).

Positions 1–15 (MKRISLIALVTLMSG) are cleaved as a signal peptide. Cysteine 16 carries the N-palmitoyl cysteine lipid modification. Cysteine 16 carries the S-diacylglycerol cysteine lipid modification.

Belongs to the FlgH family. In terms of assembly, the basal body constitutes a major portion of the flagellar organelle and consists of four rings (L,P,S, and M) mounted on a central rod.

It is found in the cell outer membrane. The protein localises to the bacterial flagellum basal body. Functionally, assembles around the rod to form the L-ring and probably protects the motor/basal body from shearing forces during rotation. The protein is Flagellar L-ring protein of Vibrio vulnificus (strain YJ016).